A 238-amino-acid polypeptide reads, in one-letter code: Neuromodulin (238 aa).

Residues 1–238 (MLCCMRRTKQ…EEPEADQEHA (238 aa)) form a disordered region. Residues C3 and C4 are each lipidated (S-palmitoyl cysteine). Residues 9 to 32 (KQVEKNDEDQKIEQDGIKPEDKAH) show a composition bias toward basic and acidic residues. An IQ domain is found at 31–60 (AHKAATKIQASFRGHITRKKLKGEKKDDAQ). S41 is modified (phosphoserine; by PHK and PKC). Over residues 54–83 (EKKDDAQAAEAEANKKDEAPVADGVEKKGE) the composition is skewed to basic and acidic residues. Positions 84–95 (GTTATEAAPATG) are enriched in low complexity. A compositionally biased stretch (basic and acidic residues) spans 97–116 (KPDEPGKAGETPSEEKKGEG). Residues 119 to 130 (ATEQAAPQAPAS) show a composition bias toward low complexity. A compositionally biased stretch (polar residues) spans 139–154 (ETESATKASTDNSPSS). Phosphoserine occurs at positions 151, 153, and 154. Basic and acidic residues predominate over residues 155-167 (KAEDAPAKEEPKQ). The segment covering 168–199 (ADVPAAVTAAAATTPAAEDAAAKATAQPPTET) has biased composition (low complexity). T181 carries the phosphothreonine modification. Phosphoserine; by CK2 is present on residues S202 and S203. Residues 213 to 225 (DETKPKESARQDE) show a composition bias toward basic and acidic residues. Acidic residues predominate over residues 226–238 (GKEEEPEADQEHA).

The protein belongs to the neuromodulin family. Identified in a complex containing FGFR4, NCAM1, CDH2, PLCG1, FRS2, SRC, SHC1, GAP43 and CTTN. Interacts (via IQ domain) with calmodulin. Binds calmodulin with a greater affinity in the absence of Ca(2+) than in its presence. In terms of processing, phosphorylated. Phosphorylation of this protein by a protein kinase C is specifically correlated with certain forms of synaptic plasticity. Palmitoylated by ZDHHC3. Palmitoylation is regulated by ARF6 and is essential for plasma membrane association and axonal and dendritic filopodia induction. Deacylated by LYPLA2.

The protein resides in the cell membrane. It is found in the cell projection. It localises to the growth cone membrane. The protein localises to the synapse. Its subcellular location is the filopodium membrane. The protein resides in the perikaryon. It is found in the dendrite. It localises to the axon. The protein localises to the cytoplasm. Functionally, this protein is associated with nerve growth. It is a major component of the motile 'growth cones' that form the tips of elongating axons. Plays a role in axonal and dendritic filopodia induction. In Macaca fascicularis (Crab-eating macaque), this protein is Neuromodulin (GAP43).